A 313-amino-acid polypeptide reads, in one-letter code: Proline-rich protein 3 (313 aa).

A signal peptide spans 1-22; that stretch reads MAITRSSLAICLILSLVTITTA. The segment at 27–312 is 35 X 5 AA approximate repeats; the sequence is PSSPPVYKSP…GPKAAPATPK (286 aa). Repeat copies occupy residues 30–34, 35–39, 40–43, 44–48, 49–53, 54–57, 58–62, 64–67, 68–72, 73–77, 82–86, 87–91, 92–96, 97–101, 102–105, 106–110, 111–115, 116–120, 121–125, 126–131, 132–136, 137–141, 142–146, 147–150, 151–155, 157–163, 164–168, 169–174, 175–181, 182–186, 187–229, 258–262, 266–270, 298–302, and 308–312.

The protein belongs to the plant proline-rich protein superfamily. ENOD12 family. Exclusively expressed in roots, particularly in root hairs-containing regions, and especially in root hairs.

Its subcellular location is the secreted. The protein resides in the cell wall. May contribute to cell wall structure in root hairs. The protein is Proline-rich protein 3 (PRP3) of Arabidopsis thaliana (Mouse-ear cress).